A 303-amino-acid polypeptide reads, in one-letter code: MAASLSSEVHSLGQLLIDPGKPLPLRFRALFTLRNLGGAEAIDCIGRGFQDESALLKHELAYCLGQMKDRRALPVLKQVLQDRQQEPMVRHEAGEALGAIGDPEVLELLREYAQDPVIEVAETCQLAVSRIEWLQKNPDSPDTNPYLSVDPAPPAEEKDVPTLRATLLDETCPLFHRYRAMFALRNIGGEEAVLALADGLQIGGSLFRHEIGYVLGQMQHKAAVPGLSAALERFEENPMVRHECAEALGSIAHEDCLKALRAHVGDGERVVRESCEVALDMHDYENSGDFQYANGLSQICEQI.

HEAT-like PBS-type repeat units lie at residues 56-82 and 89-115; these read LKHELAYCLGQMKDRRALPVLKQVLQD and VRHEAGEALGAIGDPEVLELLREYAQD. Residues His-58, His-91, and Glu-92 each coordinate Fe cation. Residues 139 to 158 are disordered; it reads DSPDTNPYLSVDPAPPAEEK. HEAT-like PBS-type repeat units lie at residues 176-202, 207-233, and 240-266; these read HRYRAMFALRNIGGEEAVLALADGLQI, FRHEIGYVLGQMQHKAAVPGLSAALER, and VRHECAEALGSIAHEDCLKALRAHVGD. Residues His-209, His-242, and Glu-243 each coordinate Fe cation.

This sequence belongs to the deoxyhypusine hydroxylase family. Fe(2+) serves as cofactor.

It carries out the reaction [eIF5A protein]-deoxyhypusine + AH2 + O2 = [eIF5A protein]-hypusine + A + H2O. It functions in the pathway protein modification; eIF5A hypusination. Functionally, catalyzes the hydroxylation of the N(6)-(4-aminobutyl)-L-lysine intermediate produced by deoxyhypusine synthase/DHPS on a critical lysine of the eukaryotic translation initiation factor 5A/eIF-5A. This is the second step of the post-translational modification of that lysine into an unusual amino acid residue named hypusine. Hypusination is unique to mature eIF-5A factor and is essential for its function. This Xenopus laevis (African clawed frog) protein is Deoxyhypusine hydroxylase (dohh).